The sequence spans 212 residues: Pyrrolidone-carboxylate peptidase (212 aa).

Residues Glu78, Cys141, and His165 contribute to the active site.

Belongs to the peptidase C15 family. In terms of assembly, homotetramer.

It localises to the cytoplasm. The enzyme catalyses Release of an N-terminal pyroglutamyl group from a polypeptide, the second amino acid generally not being Pro.. In terms of biological role, removes 5-oxoproline from various penultimate amino acid residues except L-proline. The sequence is that of Pyrrolidone-carboxylate peptidase from Staphylococcus aureus (strain bovine RF122 / ET3-1).